The following is a 984-amino-acid chain: G patch domain-containing protein TGH homolog (984 aa).

Basic and acidic residues predominate over residues 130–144 (EHARKQASKEQKERP). The segment at 130–153 (EHARKQASKEQKERPSAIPGPIPD) is disordered. The G-patch domain occupies 160 to 202 (TTSIGVKLLMKMGWRQGRSIRDAHADSLYESRREARKAFLALS). One copy of the SURP motif repeat lies at 408–450 (LIEGCAAMVARCGKHIEDFYKEKSKTNTQFNFLNEGDGCSYYA). Disordered regions lie at residues 464 to 503 (QKPD…SSFP), 679 to 717 (TRTN…ESSS), 775 to 806 (LGLD…GISR), and 820 to 984 (ESAL…HHKR). A compositionally biased stretch (basic and acidic residues) spans 473–495 (SSDKLTAENRGKILGERPLDRST). Polar residues predominate over residues 679–695 (TRTNEVESSSIAPQHTS). The segment covering 697-709 (AGATETEAKGAAT) has biased composition (low complexity). Positions 814-859 (QEIKENESALDKEEIANASADVPSDNVEELGLKYEKQEHRAEKSRS) form a coiled coil. The span at 843-858 (LGLKYEKQEHRAEKSR) shows a compositional bias: basic and acidic residues. Basic residues-rich tracts occupy residues 882–892 (SRERRSRHKIR), 905–922 (HRSK…RRSR), and 934–946 (TKRK…HHRT). Basic and acidic residues predominate over residues 947 to 974 (RNPDTDSSDHEYEERHKSSSRRSSDKDR). Over residues 975–984 (SRRRSRHHKR) the composition is skewed to basic residues.

The protein resides in the nucleus. Its function is as follows. Functions as a component of microRNA (miRNA) and small interfering RNA (siRNA) biogenesis. May assist Dicer-like (DCL) proteins to efficiently process and/or recruit the precursors of miRNAs and siRNAs. The protein is G patch domain-containing protein TGH homolog of Oryza sativa subsp. japonica (Rice).